We begin with the raw amino-acid sequence, 245 residues long: tRNA pseudouridine synthase A (245 aa).

The Nucleophile role is filled by Asp52. A substrate-binding site is contributed by Tyr111.

This sequence belongs to the tRNA pseudouridine synthase TruA family. Homodimer.

The catalysed reaction is uridine(38/39/40) in tRNA = pseudouridine(38/39/40) in tRNA. Formation of pseudouridine at positions 38, 39 and 40 in the anticodon stem and loop of transfer RNAs. This is tRNA pseudouridine synthase A from Rickettsia prowazekii (strain Madrid E).